A 296-amino-acid polypeptide reads, in one-letter code: NADH-cytochrome b5 reductase 1 (296 aa).

Residues 11 to 31 (LSAVLVKFAPFAVAVIAILAA) form a helical membrane-spanning segment. The 106-residue stretch at 47-152 (SEFQNFVLKE…RGPKGAMVYT (106 aa)) folds into the FAD-binding FR-type domain. FAD-binding positions include 132 to 147 (TTLK…GPKG) and 158 to 195 (HIGM…KIDL).

Belongs to the flavoprotein pyridine nucleotide cytochrome reductase family. Monomer. Component of the 2-(3-amino-3-carboxypropyl)histidine synthase complex composed of dph1, dph2, dph3 and a NADH-dependent reductase, predominantly cbr1. FAD serves as cofactor.

It is found in the mitochondrion outer membrane. It catalyses the reaction 2 Fe(III)-[cytochrome b5] + NADH = 2 Fe(II)-[cytochrome b5] + NAD(+) + H(+). It carries out the reaction 2 Fe(3+)-[Dph3] + NADH = 2 Fe(2+)-[Dph3] + NAD(+) + H(+). It participates in protein modification; peptidyl-diphthamide biosynthesis. Its function is as follows. NADH-dependent reductase for dph3 and cytochrome b5. Required for the first step of diphthamide biosynthesis, a post-translational modification of histidine which occurs in elongation factor 2. Dph1 and dph2 transfer a 3-amino-3-carboxypropyl (ACP) group from S-adenosyl-L-methionine (SAM) to a histidine residue, the reaction is assisted by a reduction system comprising dph3 and a NADH-dependent reductase, predominantly cbr1. By reducing dph3, also involved in the formation of the tRNA wobble base modification mcm5s 2U (5-methoxycarbonylmethyl-2-thiouridine), mediated by the elongator complex. The cytochrome b5/NADH cytochrome b5 reductase electron transfer system supports the catalytic activity of several sterol biosynthetic enzymes. In Aspergillus terreus (strain NIH 2624 / FGSC A1156), this protein is NADH-cytochrome b5 reductase 1 (cbr1).